A 225-amino-acid chain; its full sequence is Orotate phosphoribosyltransferase (225 aa).

Lysine 29 is a 5-phospho-alpha-D-ribose 1-diphosphate binding site. 37–38 (FF) provides a ligand contact to orotate. 5-phospho-alpha-D-ribose 1-diphosphate is bound by residues 75–76 (YK), arginine 101, lysine 102, lysine 105, histidine 107, and 126–134 (DDVISAGTS). Orotate-binding residues include serine 130 and arginine 158.

This sequence belongs to the purine/pyrimidine phosphoribosyltransferase family. PyrE subfamily. Homodimer. The cofactor is Mg(2+).

It carries out the reaction orotidine 5'-phosphate + diphosphate = orotate + 5-phospho-alpha-D-ribose 1-diphosphate. It functions in the pathway pyrimidine metabolism; UMP biosynthesis via de novo pathway; UMP from orotate: step 1/2. In terms of biological role, catalyzes the transfer of a ribosyl phosphate group from 5-phosphoribose 1-diphosphate to orotate, leading to the formation of orotidine monophosphate (OMP). In Ralstonia pickettii (strain 12J), this protein is Orotate phosphoribosyltransferase.